Consider the following 345-residue polypeptide: NADPH dehydrogenase (345 aa).

Residue 23 to 26 (SPMC) participates in FMN binding. A substrate-binding site is contributed by Tyr-28. FMN is bound by residues Ala-60 and Gln-102. 164-167 (HGAH) lines the substrate pocket. FMN contacts are provided by residues Arg-215 and 307–308 (GR).

It belongs to the NADH:flavin oxidoreductase/NADH oxidase family. NamA subfamily. In terms of assembly, homotetramer. FMN serves as cofactor.

It carries out the reaction A + NADPH + H(+) = AH2 + NADP(+). Functionally, catalyzes the reduction of the double bond of an array of alpha,beta-unsaturated aldehydes and ketones. It also reduces the nitro group of nitroester and nitroaromatic compounds. It could have a role in detoxification processes. The chain is NADPH dehydrogenase from Bacillus anthracis (strain CDC 684 / NRRL 3495).